A 529-amino-acid chain; its full sequence is Peptide chain release factor 3 (529 aa).

In terms of domain architecture, tr-type G spans 11–280 (KKRRTFAIIS…GLVEWAPAPL (270 aa)). Residues 20-27 (SHPDAGKT), 88-92 (DTPGH), and 142-145 (NKLD) contribute to the GTP site.

Belongs to the TRAFAC class translation factor GTPase superfamily. Classic translation factor GTPase family. PrfC subfamily.

It is found in the cytoplasm. Its function is as follows. Increases the formation of ribosomal termination complexes and stimulates activities of RF-1 and RF-2. It binds guanine nucleotides and has strong preference for UGA stop codons. It may interact directly with the ribosome. The stimulation of RF-1 and RF-2 is significantly reduced by GTP and GDP, but not by GMP. The chain is Peptide chain release factor 3 from Alteromonas mediterranea (strain DSM 17117 / CIP 110805 / LMG 28347 / Deep ecotype).